The following is a 414-amino-acid chain: Serine hydroxymethyltransferase (414 aa).

Residues leucine 117 and 121 to 123 (GHL) each bind (6S)-5,6,7,8-tetrahydrofolate. The residue at position 226 (lysine 226) is an N6-(pyridoxal phosphate)lysine. (6S)-5,6,7,8-tetrahydrofolate contacts are provided by residues glutamate 241 and 349–351 (TPF).

It belongs to the SHMT family. In terms of assembly, homodimer. The cofactor is pyridoxal 5'-phosphate.

It localises to the cytoplasm. The catalysed reaction is (6R)-5,10-methylene-5,6,7,8-tetrahydrofolate + glycine + H2O = (6S)-5,6,7,8-tetrahydrofolate + L-serine. It functions in the pathway one-carbon metabolism; tetrahydrofolate interconversion. It participates in amino-acid biosynthesis; glycine biosynthesis; glycine from L-serine: step 1/1. Catalyzes the reversible interconversion of serine and glycine with tetrahydrofolate (THF) serving as the one-carbon carrier. Also exhibits THF-independent aldolase activity toward beta-hydroxyamino acids, producing glycine and aldehydes, via a retro-aldol mechanism. This chain is Serine hydroxymethyltransferase, found in Methanothrix thermoacetophila (strain DSM 6194 / JCM 14653 / NBRC 101360 / PT) (Methanosaeta thermophila).